Consider the following 196-residue polypeptide: uncharacterized protein (196 aa).

In terms of domain architecture, HD spans 51–164 (VAEHSLLVEE…DRIFGKPDPV (114 aa)).

This is an uncharacterized protein from Rhodobacter capsulatus (strain ATCC BAA-309 / NBRC 16581 / SB1003).